The sequence spans 96 residues: Co-chaperonin GroES (96 aa).

The protein belongs to the GroES chaperonin family. In terms of assembly, heptamer of 7 subunits arranged in a ring. Interacts with the chaperonin GroEL.

The protein resides in the cytoplasm. Functionally, together with the chaperonin GroEL, plays an essential role in assisting protein folding. The GroEL-GroES system forms a nano-cage that allows encapsulation of the non-native substrate proteins and provides a physical environment optimized to promote and accelerate protein folding. GroES binds to the apical surface of the GroEL ring, thereby capping the opening of the GroEL channel. This is Co-chaperonin GroES from Aliivibrio fischeri (strain ATCC 700601 / ES114) (Vibrio fischeri).